Consider the following 547-residue polypeptide: Chaperonin GroEL (547 aa).

ATP-binding positions include 30–33 (TLGP), Lys-51, 87–91 (DGTTT), Gly-415, and Asp-496.

The protein belongs to the chaperonin (HSP60) family. In terms of assembly, forms a cylinder of 14 subunits composed of two heptameric rings stacked back-to-back. Interacts with the co-chaperonin GroES.

It localises to the cytoplasm. It catalyses the reaction ATP + H2O + a folded polypeptide = ADP + phosphate + an unfolded polypeptide.. Together with its co-chaperonin GroES, plays an essential role in assisting protein folding. The GroEL-GroES system forms a nano-cage that allows encapsulation of the non-native substrate proteins and provides a physical environment optimized to promote and accelerate protein folding. The sequence is that of Chaperonin GroEL from Pelodictyon phaeoclathratiforme (strain DSM 5477 / BU-1).